Reading from the N-terminus, the 207-residue chain is MGRCDGRCTLVVICCLQLVAALQRQVFDFMGYQWAPILANFLHIMAVILGVFGTVQVRSRYLILYAVWLVVWVGWNSFIICFYLEVGHLSQDRDFLMTFNTSLHRSWWMENGPGCLVTPVPDSPLAPQDHHVITVSGCLLDYQYIEVVSSALQVFLALFGFVYACYVSKYSPDDEDSFDFFDGLGSYNYQPPQKISQLQLRPLYTTG.

3 helical membrane-spanning segments follow: residues glycine 2 to leucine 22, alanine 35 to valine 55, and leucine 62 to phenylalanine 82. An N-linked (GlcNAc...) asparagine glycan is attached at asparagine 100. The chain crosses the membrane as a helical span at residues valine 147–valine 167.

This sequence belongs to the NKAIN family. As to quaternary structure, interacts with atp1b1 C-terminus.

It is found in the cell membrane. This chain is Sodium/potassium-transporting ATPase subunit beta-1-interacting protein 1 (nkain1), found in Danio rerio (Zebrafish).